We begin with the raw amino-acid sequence, 1169 residues long: Chromosome partition protein Smc (1169 aa).

32-39 contacts ATP; that stretch reads PNGCGKSN. Coiled coils occupy residues 170–265 and 307–481; these read ISKY…TGEE and IRHT…ERLN. The 96-residue stretch at 525–620 folds into the SMC hinge domain; sequence DRLGEKIEVA…CASDPAEAAE (96 aa). Coiled coils occupy residues 656-914 and 985-1014; these read ALAR…MKLA and RYLEEQDRDLTESLATLEQAIEKIDRECRA.

Belongs to the SMC family. In terms of assembly, homodimer.

The protein localises to the cytoplasm. Functionally, required for chromosome condensation and partitioning. In Methylococcus capsulatus (strain ATCC 33009 / NCIMB 11132 / Bath), this protein is Chromosome partition protein Smc.